We begin with the raw amino-acid sequence, 276 residues long: Small ribosomal subunit protein uS3 (276 aa).

The KH type-2 domain maps to 39-110; the sequence is IRRETMKFFK…KINIKIKEIK (72 aa). The tract at residues 218-243 is disordered; it reads DAGQVINRKSSREKSEHFDRSRVDDR. The span at 227-243 shows a compositional bias: basic and acidic residues; the sequence is SSREKSEHFDRSRVDDR.

This sequence belongs to the universal ribosomal protein uS3 family. In terms of assembly, part of the 30S ribosomal subunit. Forms a tight complex with proteins S10 and S14.

In terms of biological role, binds the lower part of the 30S subunit head. Binds mRNA in the 70S ribosome, positioning it for translation. In Borrelia hermsii (strain HS1 / DAH), this protein is Small ribosomal subunit protein uS3.